The following is a 614-amino-acid chain: Beta-glucosidase 33 (614 aa).

The N-terminal stretch at 1–26 (MATATLTLFLGLLALTSTILSFNADA) is a signal peptide. A beta-D-glucoside is bound by residues Gln-113, His-217, and 262–263 (NE). Catalysis depends on Glu-263, which acts as the Proton donor. Cys-282 and Cys-290 form a disulfide bridge. Asn-344 is a glycosylation site (N-linked (GlcNAc...) asparagine). Residue Tyr-407 coordinates a beta-D-glucoside. N-linked (GlcNAc...) asparagine glycosylation is found at Asn-419, Asn-432, and Asn-439. Residue Glu-479 participates in a beta-D-glucoside binding. Glu-479 (nucleophile) is an active-site residue. N-linked (GlcNAc...) asparagine glycosylation is present at Asn-491. A beta-D-glucoside contacts are provided by residues Trp-529, 536 to 537 (EW), and Phe-545.

The protein belongs to the glycosyl hydrolase 1 family.

The catalysed reaction is Hydrolysis of terminal, non-reducing beta-D-glucosyl residues with release of beta-D-glucose.. The protein is Beta-glucosidase 33 of Arabidopsis thaliana (Mouse-ear cress).